A 3131-amino-acid polypeptide reads, in one-letter code: Intermembrane lipid transfer protein vps1302 (3131 aa).

Positions 2-115 (LEGLLANFLN…VLESKRRQMQ (114 aa)) constitute a Chorein N-terminal domain. Over residues 774-801 (DGKASDDDDNGDWRPESSESLDSHESEY) the composition is skewed to basic and acidic residues. The interval 774-807 (DGKASDDDDNGDWRPESSESLDSHESEYKLNNTP) is disordered. Residues 2085–2363 (KVMIYPPYVI…NYSWDFPILK (279 aa)) form the SHR-BD domain.

It belongs to the VPS13 family.

The protein resides in the golgi apparatus. Its subcellular location is the trans-Golgi network. Mediates the transfer of lipids between membranes at organelle contact sites. May play a role in mitochondrial lipid homeostasis, Golgi vesicle transport, reticulophagy, actin cytoskeleton organization and formation of the forespore membrane. In Schizosaccharomyces pombe (strain 972 / ATCC 24843) (Fission yeast), this protein is Intermembrane lipid transfer protein vps1302.